The following is a 506-amino-acid chain: Cobyric acid synthase (506 aa).

In terms of domain architecture, GATase cobBQ-type spans 251-448; the sequence is DIDIAVVQVP…LHGLFDSDAF (198 aa). Residue cysteine 332 is the Nucleophile of the active site. The active site involves histidine 440.

It belongs to the CobB/CobQ family. CobQ subfamily.

It functions in the pathway cofactor biosynthesis; adenosylcobalamin biosynthesis. Catalyzes amidations at positions B, D, E, and G on adenosylcobyrinic A,C-diamide. NH(2) groups are provided by glutamine, and one molecule of ATP is hydrogenolyzed for each amidation. The protein is Cobyric acid synthase of Citrobacter koseri (strain ATCC BAA-895 / CDC 4225-83 / SGSC4696).